Reading from the N-terminus, the 150-residue chain is uncharacterized protein (150 aa).

Polar residues predominate over residues threonine 81–glutamine 90. The interval threonine 81–glutamine 125 is disordered.

This is an uncharacterized protein from Homo sapiens (Human).